Reading from the N-terminus, the 368-residue chain is DnaJ homolog subfamily C member 25 (368 aa).

The chain crosses the membrane as a helical span at residues 25-47; the sequence is MQPRLFVLVALSVLLLSGRAGAL. One can recognise a J domain in the interval 57-132; that stretch reads VCYDVLGVSR…ETRKDYDYML (76 aa). Transmembrane regions (helical) follow at residues 158-178 and 252-272; these read IVIL…WWSS and ILLF…SWYV.

It belongs to the DNAJC25 family.

It is found in the membrane. This Xenopus tropicalis (Western clawed frog) protein is DnaJ homolog subfamily C member 25 (dnajc25).